A 513-amino-acid polypeptide reads, in one-letter code: Putative thymidine phosphorylase 2 (513 aa).

This sequence belongs to the thymidine/pyrimidine-nucleoside phosphorylase family. Type 2 subfamily.

It catalyses the reaction thymidine + phosphate = 2-deoxy-alpha-D-ribose 1-phosphate + thymine. The protein is Putative thymidine phosphorylase 2 of Acidovorax sp. (strain JS42).